The following is a 244-amino-acid chain: Transcriptional activator protein Anr (244 aa).

21–149 (APLCLPLSLN…RVMSREIRDD (129 aa)) lines the a nucleoside 3',5'-cyclic phosphate pocket. The HTH crp-type domain maps to 159–232 (KTADERIATF…GKEVHILDPI (74 aa)). A DNA-binding region (H-T-H motif) is located at residues 192 to 211 (RNEIGNYLGLAVETVSRVFT).

In terms of biological role, transcriptional activator of anaerobic gene expression. Regulates the expression of the components of the hydrogen cyanide synthase (HcnABC) in a positive manner. May also act as an iron sensor. The sequence is that of Transcriptional activator protein Anr from Pseudomonas protegens (strain DSM 19095 / LMG 27888 / CFBP 6595 / CHA0).